Reading from the N-terminus, the 598-residue chain is Mitogen-activated protein kinase 19 (598 aa).

The Protein kinase domain occupies 25–316 (YRILEVIGKG…AAEALADPYF (292 aa)). Residues 31 to 39 (IGKGSYGVV) and K54 each bind ATP. D151 acts as the Proton acceptor in catalysis. At T187 the chain carries Phosphothreonine. The TXY motif lies at 187–189 (TDY). Y189 carries the phosphotyrosine modification. Position 192 is a phosphothreonine (T192). Residues 396–486 (GKSGPVIPPD…VTYENDRNLK (91 aa)) are disordered. The span at 414 to 425 (SAVHSSAVNSNA) shows a compositional bias: low complexity.

Belongs to the protein kinase superfamily. CMGC Ser/Thr protein kinase family. MAP kinase subfamily. Post-translationally, dually phosphorylated on Thr-187 and Tyr-189, which activates the enzyme.

It carries out the reaction L-seryl-[protein] + ATP = O-phospho-L-seryl-[protein] + ADP + H(+). The enzyme catalyses L-threonyl-[protein] + ATP = O-phospho-L-threonyl-[protein] + ADP + H(+). With respect to regulation, activated by threonine and tyrosine phosphorylation. The sequence is that of Mitogen-activated protein kinase 19 (MPK19) from Arabidopsis thaliana (Mouse-ear cress).